A 960-amino-acid chain; its full sequence is UvrABC system protein A (960 aa).

Glycine 35–serine 42 contributes to the ATP binding site. The C4-type zinc finger occupies cysteine 270–cysteine 297. ABC transporter domains lie at phenylalanine 327–leucine 605 and glycine 625–lysine 953. Glycine 657–serine 664 is a binding site for ATP. A C4-type zinc finger spans residues cysteine 756–cysteine 782.

The protein belongs to the ABC transporter superfamily. UvrA family. As to quaternary structure, forms a heterotetramer with UvrB during the search for lesions.

It is found in the cytoplasm. Its function is as follows. The UvrABC repair system catalyzes the recognition and processing of DNA lesions. UvrA is an ATPase and a DNA-binding protein. A damage recognition complex composed of 2 UvrA and 2 UvrB subunits scans DNA for abnormalities. When the presence of a lesion has been verified by UvrB, the UvrA molecules dissociate. This is UvrABC system protein A from Treponema pallidum (strain Nichols).